Consider the following 889-residue polypeptide: Protein argonaute 15 (889 aa).

Disordered stretches follow at residues 1-26 and 119-150; these read MESHGDEGEPSAMAKPPKKLPMSRKG and EDASSSGRTTTRRSSGGDDGSPGGSDRKRMKR. Residues 122 to 132 are compositionally biased toward low complexity; it reads SSSGRTTTRRS. The region spanning 264 to 379 is the PAZ domain; the sequence is PVIEFLLFNQ…IPLELCHLVP (116 aa). One can recognise a Piwi domain in the interval 546 to 853; sequence FVLCVLPERK…AAAQVSQFVR (308 aa). The segment at 857–878 is disordered; the sequence is AASEGSGDGGAPPRPVPELPRL.

Belongs to the argonaute family. Ago subfamily.

In terms of biological role, probably involved in the RNA silencing pathway. May bind to short RNAs such as microRNAs (miRNAs) or short interfering RNAs (siRNAs), and represses the translation of mRNAs which are complementary to them. The sequence is that of Protein argonaute 15 (AGO15) from Oryza sativa subsp. japonica (Rice).